A 320-amino-acid polypeptide reads, in one-letter code: BTB and MATH domain-containing protein 36 (320 aa).

Residues lysine 7–isoleucine 136 enclose the MATH domain. The BTB domain maps to threonine 160 to serine 227.

The polypeptide is BTB and MATH domain-containing protein 36 (bath-36) (Caenorhabditis elegans).